Reading from the N-terminus, the 519-residue chain is ATP synthase subunit beta (519 aa).

Residues 1–26 (MAKAATPKRAPARAAAIPAAATPAAK) show a composition bias toward low complexity. A disordered region spans residues 1–40 (MAKAATPKRAPARAAAIPAAATPAAKPAKRASTRSAAARS). 197–204 (GGAGVGKT) serves as a coordination point for ATP.

It belongs to the ATPase alpha/beta chains family. F-type ATPases have 2 components, CF(1) - the catalytic core - and CF(0) - the membrane proton channel. CF(1) has five subunits: alpha(3), beta(3), gamma(1), delta(1), epsilon(1). CF(0) has three main subunits: a(1), b(2) and c(9-12). The alpha and beta chains form an alternating ring which encloses part of the gamma chain. CF(1) is attached to CF(0) by a central stalk formed by the gamma and epsilon chains, while a peripheral stalk is formed by the delta and b chains.

The protein localises to the cell inner membrane. It catalyses the reaction ATP + H2O + 4 H(+)(in) = ADP + phosphate + 5 H(+)(out). Produces ATP from ADP in the presence of a proton gradient across the membrane. The catalytic sites are hosted primarily by the beta subunits. The protein is ATP synthase subunit beta of Chelativorans sp. (strain BNC1).